Reading from the N-terminus, the 364-residue chain is Alanine racemase (364 aa).

The active-site Proton acceptor; specific for D-alanine is lysine 34. Lysine 34 carries the post-translational modification N6-(pyridoxal phosphate)lysine. Arginine 129 contacts substrate. The Proton acceptor; specific for L-alanine role is filled by tyrosine 259. Methionine 307 lines the substrate pocket.

The protein belongs to the alanine racemase family. Pyridoxal 5'-phosphate serves as cofactor.

The catalysed reaction is L-alanine = D-alanine. It participates in amino-acid biosynthesis; D-alanine biosynthesis; D-alanine from L-alanine: step 1/1. Functionally, catalyzes the interconversion of L-alanine and D-alanine. May also act on other amino acids. This Coxiella burnetii (strain RSA 331 / Henzerling II) protein is Alanine racemase (alr).